Consider the following 130-residue polypeptide: Ribosome-binding factor A (130 aa).

The protein belongs to the RbfA family. Monomer. Binds 30S ribosomal subunits, but not 50S ribosomal subunits or 70S ribosomes.

It localises to the cytoplasm. Functionally, one of several proteins that assist in the late maturation steps of the functional core of the 30S ribosomal subunit. Associates with free 30S ribosomal subunits (but not with 30S subunits that are part of 70S ribosomes or polysomes). Required for efficient processing of 16S rRNA. May interact with the 5'-terminal helix region of 16S rRNA. This Flavobacterium psychrophilum (strain ATCC 49511 / DSM 21280 / CIP 103535 / JIP02/86) protein is Ribosome-binding factor A.